A 658-amino-acid polypeptide reads, in one-letter code: Translin-associated factor X-interacting protein 1 (658 aa).

Coiled-coil stretches lie at residues Glu144–Tyr184 and Ala230–Leu295.

Interacts with TSNAX.

The protein localises to the cytoplasm. The protein resides in the perinuclear region. Functionally, possible role in spermatogenesis. In Homo sapiens (Human), this protein is Translin-associated factor X-interacting protein 1.